Reading from the N-terminus, the 499-residue chain is Maturase K (499 aa).

This sequence belongs to the intron maturase 2 family. MatK subfamily.

It localises to the plastid. It is found in the chloroplast. Usually encoded in the trnK tRNA gene intron. Probably assists in splicing its own and other chloroplast group II introns. The polypeptide is Maturase K (Batis maritima (Maritime saltwort)).